The primary structure comprises 484 residues: MKFIVKLYPEIMIKSKPVRMRFTKMLESNIRNVLKKIDEDAKVQRQWDKIMVKVPKDKPELTELFAERLAHIPGIHHVLQVAEYDFETVDDIYQLALPVYRDMLKDKTFCVRVKRAGQHDFNSIEVERYVGGGLNQFTEAKGVQLKNPDVTIQLEIDRDKLYMVSQRIEGLGGFPIAAQEDVLSLISGGFDSGVASFQFIKKGSRTHYCFFNLGGAQHEIGVKQVAYHLWKTYGESHKVKFVSVPFEEVVTEILERIENGQMGVVLKRMMMRAATRVAERMGIQALVTGESLGQVSSQTLTNLNVIDRSTDLLILRPLISMDKPDIIREARRIGTEDFAASMPEYCGVISQRPTVKAVLSKVEAEEQKFSEDLLDRVLAKAEVIDIRDIAVATSERVTETETVSSAAGNEVIIDIRAPEEEESRPLDVDGVEVKVIPFFKLATAFAELDKDKTYLLYCERGVMSKLQALYLQEQGYNNVKVYRP.

A THUMP domain is found at 63–167; that stretch reads ELFAERLAHI…RDKLYMVSQR (105 aa). Residues 185-186, Lys267, Gly289, and Gln298 each bind ATP; that span reads LI. Cys346 and Cys458 are joined by a disulfide. Residues 406–484 enclose the Rhodanese domain; the sequence is AAGNEVIIDI…GYNNVKVYRP (79 aa). Catalysis depends on Cys458, which acts as the Cysteine persulfide intermediate.

This sequence belongs to the ThiI family.

The protein resides in the cytoplasm. The enzyme catalyses [ThiI sulfur-carrier protein]-S-sulfanyl-L-cysteine + a uridine in tRNA + 2 reduced [2Fe-2S]-[ferredoxin] + ATP + H(+) = [ThiI sulfur-carrier protein]-L-cysteine + a 4-thiouridine in tRNA + 2 oxidized [2Fe-2S]-[ferredoxin] + AMP + diphosphate. The catalysed reaction is [ThiS sulfur-carrier protein]-C-terminal Gly-Gly-AMP + S-sulfanyl-L-cysteinyl-[cysteine desulfurase] + AH2 = [ThiS sulfur-carrier protein]-C-terminal-Gly-aminoethanethioate + L-cysteinyl-[cysteine desulfurase] + A + AMP + 2 H(+). It functions in the pathway cofactor biosynthesis; thiamine diphosphate biosynthesis. Functionally, catalyzes the ATP-dependent transfer of a sulfur to tRNA to produce 4-thiouridine in position 8 of tRNAs, which functions as a near-UV photosensor. Also catalyzes the transfer of sulfur to the sulfur carrier protein ThiS, forming ThiS-thiocarboxylate. This is a step in the synthesis of thiazole, in the thiamine biosynthesis pathway. The sulfur is donated as persulfide by IscS. The protein is tRNA sulfurtransferase of Shewanella amazonensis (strain ATCC BAA-1098 / SB2B).